We begin with the raw amino-acid sequence, 701 residues long: Elongation factor G (701 aa).

In terms of domain architecture, tr-type G spans 8–290 (SLYRNIGISA…AVVELLPAPT (283 aa)). GTP-binding positions include 17-24 (AHIDAGKT), 88-92 (DTPGH), and 142-145 (NKMD).

Belongs to the TRAFAC class translation factor GTPase superfamily. Classic translation factor GTPase family. EF-G/EF-2 subfamily.

The protein resides in the cytoplasm. Its function is as follows. Catalyzes the GTP-dependent ribosomal translocation step during translation elongation. During this step, the ribosome changes from the pre-translocational (PRE) to the post-translocational (POST) state as the newly formed A-site-bound peptidyl-tRNA and P-site-bound deacylated tRNA move to the P and E sites, respectively. Catalyzes the coordinated movement of the two tRNA molecules, the mRNA and conformational changes in the ribosome. The protein is Elongation factor G of Neisseria meningitidis serogroup B (strain ATCC BAA-335 / MC58).